The primary structure comprises 187 residues: Large ribosomal subunit protein uL5 (187 aa).

This sequence belongs to the universal ribosomal protein uL5 family. In terms of assembly, part of the 50S ribosomal subunit; part of the 5S rRNA/L5/L18/L25 subcomplex. Contacts the 5S rRNA and the P site tRNA. Forms a bridge to the 30S subunit in the 70S ribosome.

Functionally, this is one of the proteins that bind and probably mediate the attachment of the 5S RNA into the large ribosomal subunit, where it forms part of the central protuberance. In the 70S ribosome it contacts protein S13 of the 30S subunit (bridge B1b), connecting the 2 subunits; this bridge is implicated in subunit movement. Contacts the P site tRNA; the 5S rRNA and some of its associated proteins might help stabilize positioning of ribosome-bound tRNAs. The chain is Large ribosomal subunit protein uL5 from Mycolicibacterium paratuberculosis (strain ATCC BAA-968 / K-10) (Mycobacterium paratuberculosis).